We begin with the raw amino-acid sequence, 291 residues long: uncharacterized protein (291 aa).

Residues 1-55 (MRTHDIPRSPLVGHKKNAAPDGIGASRACCPARENEPFKKGSTNSRGGGVEWSRS) form a disordered region. The next 2 membrane-spanning stretches (helical) occupy residues 74–96 (WWAV…PVHA) and 188–210 (YYYL…RIRL).

It to T.pallidum TP_0733.

The protein localises to the cell membrane. This is an uncharacterized protein from Treponema pallidum (strain Nichols).